A 278-amino-acid chain; its full sequence is MLEQEENGLFEIPDYEHVEDETFPPFPPPASPERDPADAEPEEGSGSGVPVPPKRTVKRNLPKLDATRLTSERGLPALRHVFDKTKFKGKGHEAEDLKTLIRHMEHWAHRLFPKLQFEDFIDRVENLGNKKEVQTCLKRIRLDLPIVHEDFVNNNDEVGEANGPDVSATGFDPFLTSSSDSRKFASEPTRSLTEEQQQRIERNKQLALERRQAKLLSNSQSLENDVTVEENSTGEDQEESNGLNIDTADGPHDVPFASTHEEEQCKAEETQLDHTNLD.

Residues 1-59 (MLEQEENGLFEIPDYEHVEDETFPPFPPPASPERDPADAEPEEGSGSGVPVPPKRTVKR) form a disordered region. The interaction with TIMELESS stretch occupies residues 64–140 (LDATRLTSER…KEVQTCLKRI (77 aa)). Disordered stretches follow at residues 155–197 (NDEV…EEQQ) and 216–278 (LSNS…TNLD). Ser191 and Ser219 each carry phosphoserine. Residues 226–239 (VTVEENSTGEDQEE) are compositionally biased toward acidic residues. Position 233 is a phosphothreonine (Thr233). The span at 259–278 (THEEEQCKAEETQLDHTNLD) shows a compositional bias: basic and acidic residues.

This sequence belongs to the CSM3 family. In terms of assembly, interacts with MCM6 and MCM7. Interacts with TIMELESS (via N-terminus), which impairs TIMELESS self-association. Interacts with RPA2 and PRDX2. In terms of tissue distribution, expressed in brain.

The protein resides in the cytoplasm. Its subcellular location is the nucleus. Its function is as follows. Plays an important role in the control of DNA replication and the maintenance of replication fork stability. Important for cell survival after DNA damage or replication stress. May be specifically required for the ATR-CHEK1 pathway in the replication checkpoint induced by hydroxyurea or ultraviolet light. Forms a complex with TIMELESS and this complex regulates DNA replication processes under both normal and stress conditions, stabilizes replication forks and influences both CHEK1 phosphorylation and the intra-S phase checkpoint in response to genotoxic stress. The chain is TIMELESS-interacting protein (Tipin) from Mus musculus (Mouse).